We begin with the raw amino-acid sequence, 486 residues long: Ribulose bisphosphate carboxylase large chain, plasmid (486 aa).

Substrate-binding residues include N126 and T176. K178 acts as the Proton acceptor in catalysis. K180 lines the substrate pocket. Mg(2+) is bound by residues K204, D206, and E207. An N6-carboxylysine modification is found at K204. The active-site Proton acceptor is H296. 3 residues coordinate substrate: R297, H329, and S381.

It belongs to the RuBisCO large chain family. Type I subfamily. As to quaternary structure, heterohexadecamer of 8 large chains and 8 small chains. Mg(2+) serves as cofactor.

It catalyses the reaction 2 (2R)-3-phosphoglycerate + 2 H(+) = D-ribulose 1,5-bisphosphate + CO2 + H2O. The enzyme catalyses D-ribulose 1,5-bisphosphate + O2 = 2-phosphoglycolate + (2R)-3-phosphoglycerate + 2 H(+). In terms of biological role, ruBisCO catalyzes two reactions: the carboxylation of D-ribulose 1,5-bisphosphate, the primary event in carbon dioxide fixation, as well as the oxidative fragmentation of the pentose substrate. Both reactions occur simultaneously and in competition at the same active site. This Cupriavidus necator (strain ATCC 17699 / DSM 428 / KCTC 22496 / NCIMB 10442 / H16 / Stanier 337) (Ralstonia eutropha) protein is Ribulose bisphosphate carboxylase large chain, plasmid (cbbL2).